Consider the following 307-residue polypeptide: Potassium channel subfamily K member 7 (307 aa).

Residues 1-10 (MGGLRPWSRY) are Cytoplasmic-facing. A helical membrane pass occupies residues 11–31 (GLLVVAHLLALGLGAVVFQAL). N-linked (GlcNAc...) asparagine glycosylation is present at Asn-83. The segment at residues 92 to 119 (LPSALLFAASILTTTGYGHMAPLSPGGK) is an intramembrane region (pore-forming). Residues 120–140 (AFCMVYAALGLPASLALVATL) traverse the membrane as a helical segment. Residues 141–170 (RHCLLPVLSRPRAWVAVHWQLSPARAALLQ) lie on the Cytoplasmic side of the membrane. The helical transmembrane segment at 171 to 191 (AVALGLLVASSFVLLPALVLW) threads the bilayer. Positions 199–227 (LLGAVYFCFSSLSTIGLEDLLPGRGRSLH) form an intramembrane region, pore-forming. A helical transmembrane segment spans residues 233–253 (LGQLALLGYLLLGLLAMLLAV). Residues 254–307 (ETFSELPQVRAMGKFFRPSGPVTAEDQGGILGQDELALSTLPPAAPASGQAPAC) are Cytoplasmic-facing.

The protein belongs to the two pore domain potassium channel (TC 1.A.1.8) family. In terms of assembly, homodimer.

The protein localises to the membrane. In terms of biological role, probable potassium channel subunit. No channel activity observed in vitro as protein remains in the endoplasmic reticulum. May need to associate with an as yet unknown partner in order to reach the plasma membrane. The protein is Potassium channel subfamily K member 7 (KCNK7) of Homo sapiens (Human).